The following is a 513-amino-acid chain: Sphingolipid C9-methyltransferase 1 (513 aa).

2 helical membrane passes run 63 to 83 (FLVA…GGGL) and 85 to 105 (TAIF…WTVM). S-adenosyl-L-methionine is bound by residues 228–229 (YT), 265–273 (LLDIGCGWG), 291–296 (TLARNQ), and 321–322 (YR).

This sequence belongs to the CFA/CMAS family.

Its subcellular location is the membrane. It carries out the reaction a (4E,8E)-4-sphinga-4,8-dienine ceramide + S-adenosyl-L-methionine = a 9-methyl-(4E,8E)-sphinga-4,8-dienine ceramide + S-adenosyl-L-homocysteine + H(+). It functions in the pathway lipid metabolism; sphingolipid metabolism. In terms of biological role, catalyzes methylation of the sphingoid base component of glucosylceramides (GluCers) at the C9-position. Sphingolipid C9-methylation requires 4,8-desaturated ceramides as substrates. Glucosylceramides play important roles in the growth, differentiation and pathogenicity. The methyl group at the C9-position distinguishes fungal glucosylceramides from those of plants and animals, and may thus play a role in host-pathogen interactions enabling the host to recognize the fungal attack and initiate specific defense responses. However, C-9 methylation of GlcCers is not essential for the sensitivity of F.graminearum to plant defensins MsDef1 and RsAFP2. The polypeptide is Sphingolipid C9-methyltransferase 1 (Gibberella zeae (strain ATCC MYA-4620 / CBS 123657 / FGSC 9075 / NRRL 31084 / PH-1) (Wheat head blight fungus)).